The primary structure comprises 332 residues: Transcription initiation factor IIB 2 (332 aa).

The span at 1 to 10 (MSDTITTRTY) shows a compositional bias: polar residues. The disordered stretch occupies residues 1-36 (MSDTITTRTYSADAKSRDVRPRESERDETQQDETQV). Over residues 14–29 (AKSRDVRPRESERDET) the composition is skewed to basic and acidic residues. The segment at 33–63 (ETQVCPECSGHLVTDEEHGETICEDCGLVVE) adopts a TFIIB-type zinc-finger fold. The Zn(2+) site is built by C37, C40, C55, and C58. The interval 77 to 106 (DSAERDSKSRVGAPTTKMMHDKGLSTNIGW) is disordered. 2 tandem repeats follow at residues 149-232 (GEID…VREL) and 243-324 (QYVP…ELLE).

This sequence belongs to the TFIIB family.

Stabilizes TBP binding to an archaeal box-A promoter. Also responsible for recruiting RNA polymerase II to the pre-initiation complex (DNA-TBP-TFIIB). This Haloferax volcanii (strain ATCC 29605 / DSM 3757 / JCM 8879 / NBRC 14742 / NCIMB 2012 / VKM B-1768 / DS2) (Halobacterium volcanii) protein is Transcription initiation factor IIB 2.